A 29-amino-acid polypeptide reads, in one-letter code: Inorganic pyrophosphatase (29 aa).

It localises to the periplasm. The enzyme catalyses diphosphate + H2O = 2 phosphate + H(+). Its function is as follows. Inorganic pyrophosphatase is an essential enzyme for the activation of sulfate by sulfate reducing bacteria. This is a high activity pyrophosphatase. The protein is Inorganic pyrophosphatase of Nitratidesulfovibrio vulgaris (strain ATCC 29579 / DSM 644 / CCUG 34227 / NCIMB 8303 / VKM B-1760 / Hildenborough) (Desulfovibrio vulgaris).